A 158-amino-acid polypeptide reads, in one-letter code: Cytochrome c-type biogenesis protein CcmE (158 aa).

Over Met1–Arg8 the chain is Cytoplasmic. A helical; Signal-anchor for type II membrane protein transmembrane segment spans residues Leu9–Ala29. Residues Leu30–Arg158 are Periplasmic-facing. Heme is bound by residues His123 and Tyr127. The segment at Ala139–Arg158 is disordered.

The protein belongs to the CcmE/CycJ family.

It localises to the cell inner membrane. Functionally, heme chaperone required for the biogenesis of c-type cytochromes. Transiently binds heme delivered by CcmC and transfers the heme to apo-cytochromes in a process facilitated by CcmF and CcmH. In Maricaulis maris (strain MCS10) (Caulobacter maris), this protein is Cytochrome c-type biogenesis protein CcmE.